The primary structure comprises 179 residues: Probable chorismate pyruvate-lyase (179 aa).

Substrate is bound by residues R82, L120, and E165.

This sequence belongs to the UbiC family.

The protein resides in the cytoplasm. It catalyses the reaction chorismate = 4-hydroxybenzoate + pyruvate. It functions in the pathway cofactor biosynthesis; ubiquinone biosynthesis. Removes the pyruvyl group from chorismate, with concomitant aromatization of the ring, to provide 4-hydroxybenzoate (4HB) for the ubiquinone pathway. The sequence is that of Probable chorismate pyruvate-lyase from Vibrio vulnificus (strain YJ016).